Consider the following 341-residue polypeptide: Heterogeneous nuclear ribonucleoproteins A2/B1 (341 aa).

2 RRM domains span residues 9–92 (RKLF…ESGK) and 100–179 (KKLF…LSRQ). Residue lysine 10 forms a Glycyl lysine isopeptide (Lys-Gly) (interchain with G-Cter in SUMO2) linkage. Serine 17 carries the phosphoserine modification. Arginine 26 bears the Omega-N-methylarginine mark. The residue at position 73 (serine 73) is a Phosphoserine. Lysine 92 carries the post-translational modification N6,N6-dimethyllysine; alternate. Residue lysine 92 forms a Glycyl lysine isopeptide (Lys-Gly) (interchain with G-Cter in SUMO2); alternate linkage. Glycyl lysine isopeptide (Lys-Gly) (interchain with G-Cter in SUMO2) cross-links involve residues lysine 100, lysine 108, and lysine 125. Position 128 is a phosphothreonine (threonine 128). A Phosphoserine modification is found at serine 137. Lysine 140 is covalently cross-linked (Glycyl lysine isopeptide (Lys-Gly) (interchain with G-Cter in SUMO2)). Threonine 147 bears the Phosphothreonine mark. Residues lysine 156 and lysine 161 each participate in a glycyl lysine isopeptide (Lys-Gly) (interchain with G-Cter in SUMO2); alternate cross-link. N6-acetyllysine; alternate is present on residues lysine 156 and lysine 161. Threonine 164 is subject to Phosphothreonine. A Glycyl lysine isopeptide (Lys-Gly) (interchain with G-Cter in SUMO2) cross-link involves residue lysine 174. Phosphoserine occurs at positions 177 and 189. Residues 181-341 (MQEVQSSRSG…SGGYGGRSRY (161 aa)) form a disordered region. Residues 190–211 (GRGGNFGFGDSRGGGGNFGPGP) are compositionally biased toward gly residues. The residue at position 191 (arginine 191) is an Asymmetric dimethylarginine; alternate. Residue arginine 191 is modified to Dimethylated arginine; alternate. An Omega-N-methylarginine; alternate modification is found at arginine 191. Position 200 is a phosphoserine (serine 200). Arginine 201 bears the Asymmetric dimethylarginine; alternate mark. Dimethylated arginine; alternate is present on arginine 201. Arginine 201 carries the omega-N-methylarginine; alternate modification. Phosphoserine is present on serine 213. Residue arginine 216 is modified to Omega-N-methylarginine. Phosphoserine is present on residues serine 219 and serine 224. Arginine 226 carries the omega-N-methylarginine modification. Serine 247 bears the Phosphoserine mark. At arginine 254 the chain carries Asymmetric dimethylarginine; alternate. Position 254 is an omega-N-methylarginine; alternate (arginine 254). A nuclear targeting sequence region spans residues 296–335 (QQPSNYGPMKSGNFGGSRNMGGPYGGGNYGPGGSGGSGGY). A compositionally biased stretch (gly residues) spans 308-341 (NFGGSRNMGGPYGGGNYGPGGSGGSGGYGGRSRY). Serine 312 is modified (phosphoserine). Arginine 313 carries the post-translational modification Omega-N-methylarginine. Tyrosine 319 bears the Phosphotyrosine mark. Phosphoserine is present on residues serine 329 and serine 332. Tyrosine 335 is modified (phosphotyrosine). An Omega-N-methylarginine modification is found at arginine 338.

In terms of assembly, identified in the spliceosome C complex. Identified in a IGF2BP1-dependent mRNP granule complex containing untranslated mRNAs. Interacts with IGF2BP1. Interacts with C9orf72. Interacts with DGCR8. Interacts with TARDBP. Interacts with CKAP5. Interacts with PPIA/CYPA. Interacts (via C-terminus) with FAM76B; the interaction results in retention of HNRNPA2B1 in the nucleus and inhibition of the NF-kappa-B-mediated inflammatory pathway. Interacts with NF-kappa-B inhibitors NFKBIA and NFKBIE; the interaction may be mediated by the RRM2 domain of HNRNPA2B1, and HNRNPA2B1 may interact simultaneously with FAM76B and either NFKBIA or NFKBIE to form a complex. In terms of processing, sumoylated in exosomes, promoting miRNAs-binding. Asymmetric dimethylation at Arg-254 constitutes the major methylation site. According to a report, methylation affects subcellular location and promotes nuclear localization. According to another report, methylation at Arg-254 does not influence nucleocytoplasmic shuttling.

The protein localises to the nucleus. It localises to the nucleoplasm. Its subcellular location is the cytoplasmic granule. It is found in the secreted. The protein resides in the extracellular exosome. In terms of biological role, heterogeneous nuclear ribonucleoprotein (hnRNP) that associates with nascent pre-mRNAs, packaging them into hnRNP particles. The hnRNP particle arrangement on nascent hnRNA is non-random and sequence-dependent and serves to condense and stabilize the transcripts and minimize tangling and knotting. Packaging plays a role in various processes such as transcription, pre-mRNA processing, RNA nuclear export, subcellular location, mRNA translation and stability of mature mRNAs. Forms hnRNP particles with at least 20 other different hnRNP and heterogeneous nuclear RNA in the nucleus. Involved in transport of specific mRNAs to the cytoplasm in oligodendrocytes and neurons: acts by specifically recognizing and binding the A2RE (21 nucleotide hnRNP A2 response element) or the A2RE11 (derivative 11 nucleotide oligonucleotide) sequence motifs present on some mRNAs, and promotes their transport to the cytoplasm. Specifically binds single-stranded telomeric DNA sequences, protecting telomeric DNA repeat against endonuclease digestion. Also binds other RNA molecules, such as primary miRNA (pri-miRNAs): acts as a nuclear 'reader' of the N6-methyladenosine (m6A) mark by specifically recognizing and binding a subset of nuclear m6A-containing pri-miRNAs. Binding to m6A-containing pri-miRNAs promotes pri-miRNA processing by enhancing binding of DGCR8 to pri-miRNA transcripts. Involved in miRNA sorting into exosomes following sumoylation, possibly by binding (m6A)-containing pre-miRNAs. Acts as a regulator of efficiency of mRNA splicing, possibly by binding to m6A-containing pre-mRNAs. Plays a role in the splicing of pyruvate kinase PKM by binding repressively to sequences flanking PKM exon 9, inhibiting exon 9 inclusion and resulting in exon 10 inclusion and production of the PKM M2 isoform. The chain is Heterogeneous nuclear ribonucleoproteins A2/B1 (HNRNPA2B1) from Bos taurus (Bovine).